The primary structure comprises 259 residues: Glutamate 5-kinase (259 aa).

An ATP-binding site is contributed by Lys18. Ser54, Asp141, and Asn153 together coordinate substrate. 173–174 (SD) contributes to the ATP binding site.

It belongs to the glutamate 5-kinase family.

Its subcellular location is the cytoplasm. It carries out the reaction L-glutamate + ATP = L-glutamyl 5-phosphate + ADP. The protein operates within amino-acid biosynthesis; L-proline biosynthesis; L-glutamate 5-semialdehyde from L-glutamate: step 1/2. Catalyzes the transfer of a phosphate group to glutamate to form L-glutamate 5-phosphate. This is Glutamate 5-kinase from Clavibacter sepedonicus (Clavibacter michiganensis subsp. sepedonicus).